The primary structure comprises 190 residues: Inner membrane-spanning protein YciB (190 aa).

5 helical membrane-spanning segments follow: residues 22–42 (IYVATGALIVATAIQIVLTFA), 50–70 (MQLITFAMVAIFGGMTIFLHD), 76–96 (WKVTIVYAIFAIGLAVSHAMG), 118–138 (INWAWVAFFSFCAGLNVYVAF), and 148–168 (FKVFGLLIATFAYMIATGFYI).

It belongs to the YciB family.

It is found in the cell inner membrane. Functionally, plays a role in cell envelope biogenesis, maintenance of cell envelope integrity and membrane homeostasis. The sequence is that of Inner membrane-spanning protein YciB from Vibrio campbellii (strain ATCC BAA-1116).